Reading from the N-terminus, the 463-residue chain is Cytochrome c-552 (463 aa).

The N-terminal stretch at 1 to 23 (MNVKSIALSAVIATSFLAAGAMA) is a signal peptide. His83 provides a ligand contact to heme c. Cys111, Cys114, and Lys115 together coordinate heme. The heme c site is built by Cys149, Cys152, His153, Cys191, Cys194, and His195. 4 residues coordinate Ca(2+): Glu197, Tyr198, Lys246, and Gln248. Tyr198 lines the substrate pocket. His249 contacts substrate. Heme c contacts are provided by His260, Cys267, Cys270, His271, His286, Cys299, Cys302, His303, and His378.

It belongs to the cytochrome c-552 family. The cofactor is Ca(2+). Heme c serves as cofactor.

The protein localises to the periplasm. It catalyses the reaction 6 Fe(III)-[cytochrome c] + NH4(+) + 2 H2O = 6 Fe(II)-[cytochrome c] + nitrite + 8 H(+). It functions in the pathway nitrogen metabolism; nitrate reduction (assimilation). Functionally, catalyzes the reduction of nitrite to ammonia, consuming six electrons in the process. The chain is Cytochrome c-552 from Shewanella frigidimarina (strain NCIMB 400).